The chain runs to 150 residues: UPF0179 protein Mbur_1033 (150 aa).

Belongs to the UPF0179 family.

The chain is UPF0179 protein Mbur_1033 from Methanococcoides burtonii (strain DSM 6242 / NBRC 107633 / OCM 468 / ACE-M).